Reading from the N-terminus, the 310-residue chain is tRNA dimethylallyltransferase (310 aa).

Residue 14-21 (GPTASGKS) participates in ATP binding. Position 16–21 (16–21 (TASGKS)) interacts with substrate. 2 interaction with substrate tRNA regions span residues 39–42 (DSMQ) and 163–167 (QRIVR).

The protein belongs to the IPP transferase family. In terms of assembly, monomer. Mg(2+) is required as a cofactor.

It carries out the reaction adenosine(37) in tRNA + dimethylallyl diphosphate = N(6)-dimethylallyladenosine(37) in tRNA + diphosphate. Functionally, catalyzes the transfer of a dimethylallyl group onto the adenine at position 37 in tRNAs that read codons beginning with uridine, leading to the formation of N6-(dimethylallyl)adenosine (i(6)A). This chain is tRNA dimethylallyltransferase, found in Brucella ovis (strain ATCC 25840 / 63/290 / NCTC 10512).